The primary structure comprises 345 residues: Adenine deaminase (345 aa).

Zn(2+) is bound by residues histidine 20, histidine 22, and histidine 204. The active-site Proton donor is glutamate 207. Aspartate 285 contacts Zn(2+). Aspartate 286 is a binding site for substrate.

The protein belongs to the metallo-dependent hydrolases superfamily. Adenosine and AMP deaminases family. Adenine deaminase type 2 subfamily. Zn(2+) is required as a cofactor.

The catalysed reaction is adenine + H2O + H(+) = hypoxanthine + NH4(+). Its function is as follows. Catalyzes the hydrolytic deamination of adenine to hypoxanthine. Plays an important role in the purine salvage pathway and in nitrogen catabolism. The sequence is that of Adenine deaminase from Ralstonia pickettii (strain 12J).